The sequence spans 355 residues: Peptide chain release factor 1 (355 aa).

Q231 carries the N5-methylglutamine modification. Positions 283–303 (LAKESEARKSQVGSGDRSERI) are disordered.

Belongs to the prokaryotic/mitochondrial release factor family. In terms of processing, methylated by PrmC. Methylation increases the termination efficiency of RF1.

It is found in the cytoplasm. Peptide chain release factor 1 directs the termination of translation in response to the peptide chain termination codons UAG and UAA. The chain is Peptide chain release factor 1 from Campylobacter lari (strain RM2100 / D67 / ATCC BAA-1060).